The primary structure comprises 428 residues: Serine--tRNA ligase (428 aa).

231 to 233 lines the L-serine pocket; the sequence is TAE. Residues 262–264 and valine 278 contribute to the ATP site; that span reads RRE. Glutamate 285 contributes to the L-serine binding site. 349 to 352 contacts ATP; sequence EVSS. Serine 384 serves as a coordination point for L-serine.

Belongs to the class-II aminoacyl-tRNA synthetase family. Type-1 seryl-tRNA synthetase subfamily. Homodimer. The tRNA molecule binds across the dimer.

It localises to the cytoplasm. The catalysed reaction is tRNA(Ser) + L-serine + ATP = L-seryl-tRNA(Ser) + AMP + diphosphate + H(+). The enzyme catalyses tRNA(Sec) + L-serine + ATP = L-seryl-tRNA(Sec) + AMP + diphosphate + H(+). The protein operates within aminoacyl-tRNA biosynthesis; selenocysteinyl-tRNA(Sec) biosynthesis; L-seryl-tRNA(Sec) from L-serine and tRNA(Sec): step 1/1. Functionally, catalyzes the attachment of serine to tRNA(Ser). Is also able to aminoacylate tRNA(Sec) with serine, to form the misacylated tRNA L-seryl-tRNA(Sec), which will be further converted into selenocysteinyl-tRNA(Sec). This Chlamydia trachomatis serovar A (strain ATCC VR-571B / DSM 19440 / HAR-13) protein is Serine--tRNA ligase.